A 311-amino-acid polypeptide reads, in one-letter code: Malate dehydrogenase (311 aa).

Residues 7–13 (GAAGGIG) and D34 contribute to the NAD(+) site. R81 and R87 together coordinate substrate. Residues N94 and 117-119 (ITN) contribute to the NAD(+) site. N119 and R153 together coordinate substrate. Residue H177 is the Proton acceptor of the active site. Position 227 (M227) interacts with NAD(+).

It belongs to the LDH/MDH superfamily. MDH type 1 family. In terms of assembly, homodimer.

The catalysed reaction is (S)-malate + NAD(+) = oxaloacetate + NADH + H(+). Its function is as follows. Catalyzes the reversible oxidation of malate to oxaloacetate. The chain is Malate dehydrogenase from Shewanella woodyi (strain ATCC 51908 / MS32).